Here is a 322-residue protein sequence, read N- to C-terminus: uncharacterized protein (322 aa).

Residues 1-17 (MASMAAAIAASRSAVMS) show a composition bias toward low complexity. Residues 1-22 (MASMAAAIAASRSAVMSGNRPL) form a disordered region. Ala-2 carries the post-translational modification N-acetylalanine. Ser-37 is modified (phosphoserine). Residues 81–104 (AAAADAGDVRDPARFPGLRGPTGQ) form a disordered region. Ser-130 carries the phosphoserine modification. 2 stretches are compositionally biased toward polar residues: residues 142–153 (QEPSAATVTSDA) and 161–177 (QGTQ…SSSL). Residues 142–301 (QEPSAATVTS…DDDALFSEPA (160 aa)) form a disordered region. Phosphoserine is present on Ser-176. Positions 183–203 (ARKEEEAPFWKINAERSREGP) are enriched in basic and acidic residues. Residues 245–255 (QEQQTLPSVSA) show a composition bias toward polar residues.

Its subcellular location is the cytoplasm. This is an uncharacterized protein from Mus musculus (Mouse).